The sequence spans 54 residues: UPF0235 protein in proC 3'region (54 aa).

Belongs to the UPF0235 family.

The protein is UPF0235 protein in proC 3'region of Vibrio alginolyticus.